Here is a 1214-residue protein sequence, read N- to C-terminus: MVKLFGKSKKKEESPQSIDIAFQSILDEIGVVETEKKHLMATMDTVRKQQLIQSYSSKKFSKNEFGNKSKKKSIITQSPHYFVDCLKNDPSKEVLTSLRVRLGNQPLKWLKEFLSLDGVSLLIKVLILNEIKQVKNQEDIYKIAQCLHSLKLIMNTKFGLESVIKQPTNIHSISLVMDTPHLKTRIMVIELLAALCVVNSKGLPLVLSAMDNYREVKREKKPFIHLFQGLKNPSGSLQATTFALINTLISSSQSVEERQKIRNQFKKLGITKVIEELEPEYANNPDLATQKDLYEQECRWDEQEQIENARGDISDENPEALVKAILDRTAGGPLYSSFTSILRLLANSITDQTKDQSLSNYLFVEKVIGKMNNGESYLDDIGTFFGGGGGGDGSLDIAHVSGEKAVLIQKEIEDLKKQKKRDQDKLAEKDKLLTKLAKRMRKMEEAIKLGKGLEYLNNQIEIESPPDSSTSTPQETTPGGTKVPLKTSPVTKADLKHKLSTFTTAKAPNGVSDFLSGLDTTNQQGSTDASQTEAGSGDGIPLPPGAPPPPPPPGGKLAPSTPQLCSRPPSIKMKSYQWTRYRTRNVTNTFWKNVNLTKYNDCLPHEQIEGLFGAAIFEKKEKELKKGSEVTVIDTKRAQNIGILLSRFKNVTHDAIYDAIYSLDESILDLETINQFIKYIPSKEEIDCIIAFKQQQEQLPEEERMKLGKSEIFIDKISTIPRLEQRIQALHFKLNFPDKLYHAKPDIRKFNEAFVQLQNNNIFAIMELILSIGNFINFGTNRGNASGFKIDSINKMADTKSNIREKYTLVHYLIELLESTQPELLKVFDEIPSVVDAATLSFNQSSSEIKLLRAGLIKLEKEIFVRQPKSVEPKPDDETINNNGEDDINNTSSDEKTEGQQQRQGEEEENDESESTGNSFADSLKKKKSQVNTNSTSDSKQSLEPLKDDDPLKLKLSEFLLASKTELDDTETLIAETEVLFKSICKFFGEDSTKIQPEEFLAIFKKFNDKFIMSKKDLEIEKSIKDKSTQRKNEKERKEMEIKKSKLEMIHSKLKKIGSPSSSNRILASNESSPTSSTSSVVHQHDDEDEETIKEYINNPSPSQQSNSSEEEGMMDDLLNLIRDGNFRELRRMNLQQKKPVRTKRVIAKQPTRPQALDTPSSTYSSISSIYDAEPLDMSDQEDEDEEEEEDEEEEEEEEEGDDDNDNDEEEGEN.

The GBD/FH3 domain maps to 10–379 (KKEESPQSID…KMNNGESYLD (370 aa)). Residues 401–448 (SGEKAVLIQKEIEDLKKQKKRDQDKLAEKDKLLTKLAKRMRKMEEAIK) are a coiled coil. Residues 457-544 (NNQIEIESPP…GSGDGIPLPP (88 aa)) enclose the FH1 domain. 2 stretches are compositionally biased toward polar residues: residues 462–479 (IESPPDSSTSTPQETTPG) and 518–534 (LDTTNQQGSTDASQTEA). Disordered stretches follow at residues 462-490 (IESPPDSSTSTPQETTPGGTKVPLKTSPV), 507-569 (APNG…SRPP), 868-948 (PKSV…PLKD), 1026-1045 (DKSTQRKNEKERKEMEIKKS), 1054-1089 (LKKIGSPSSSNRILASNESSPTSSTSSVVHQHDDED), and 1133-1214 (MNLQ…EGEN). Residues 541–554 (PLPPGAPPPPPPPG) show a composition bias toward pro residues. Residues 562–1037 (PQLCSRPPSI…STQRKNEKER (476 aa)) form the FH2 domain. The span at 868–877 (PKSVEPKPDD) shows a compositional bias: basic and acidic residues. Polar residues predominate over residues 930–940 (QVNTNSTSDSK). A coiled-coil region spans residues 1019–1056 (EIEKSIKDKSTQRKNEKERKEMEIKKSKLEMIHSKLKK). Residues 1059–1071 (SPSSSNRILASNE) show a composition bias toward polar residues. Positions 1065–1095 (RILASNESSPTSSTSSVVHQHDDEDEETIKE) constitute a DAD domain. Over residues 1161–1171 (SSTYSSISSIY) the composition is skewed to low complexity. Residues 1174 to 1214 (EPLDMSDQEDEDEEEEEDEEEEEEEEEGDDDNDNDEEEGEN) show a composition bias toward acidic residues. Residues 1176-1207 (LDMSDQEDEDEEEEEDEEEEEEEEEGDDDNDN) adopt a coiled-coil conformation.

Belongs to the formin homology family. Diaphanous subfamily. As to quaternary structure, interacts (via GBD/FH3 domain) with activated Rho-GTPases.

Its function is as follows. Formins play an important role in the nucleation of actin and the formation of linear actin filaments. This Dictyostelium discoideum (Social amoeba) protein is Formin-D (forD).